Consider the following 278-residue polypeptide: Sulfur carrier protein FdhD (278 aa).

C121 (cysteine persulfide intermediate) is an active-site residue. 260-265 (FCKPGR) provides a ligand contact to Mo-bis(molybdopterin guanine dinucleotide).

It belongs to the FdhD family.

It localises to the cytoplasm. Functionally, required for formate dehydrogenase (FDH) activity. Acts as a sulfur carrier protein that transfers sulfur from IscS to the molybdenum cofactor prior to its insertion into FDH. The protein is Sulfur carrier protein FdhD of Salmonella choleraesuis (strain SC-B67).